The following is a 514-amino-acid chain: Alstonine synthase (514 aa).

A helical membrane pass occupies residues proline 4–isoleucine 24. Asparagine 428 carries N-linked (GlcNAc...) asparagine glycosylation. Heme is bound at residue cysteine 450.

Belongs to the cytochrome P450 family. Heme serves as cofactor.

It localises to the membrane. The catalysed reaction is tetrahydroalstonine + A + reduced [NADPH--hemoprotein reductase] + O2 = alstonine + AH2 + oxidized [NADPH--hemoprotein reductase] + 2 H2O + H(+). It participates in alkaloid biosynthesis. A cytochrome P450 monooxygenase involved in the biosynthesis of pentacyclic alkaloids natural products such as alstonine, putative antipsychotic compounds. Catalyzes the conversion of tetrahydroalstonine to alstonine. No oxidative activity towards ajmalicine. The polypeptide is Alstonine synthase (Alstonia scholaris (Dogbane)).